Consider the following 454-residue polypeptide: DNA primase small subunit (454 aa).

Residues E66, D131, and D133 contribute to the active site. Mg(2+)-binding residues include D131 and D133. The Mn(2+) site is built by D131 and D133. An a ribonucleoside 5'-triphosphate-binding site is contributed by 131 to 133; the sequence is DID. The Zn(2+) site is built by C143, C144, C150, and C153. The Zinc knuckle motif motif lies at 143–153; that stretch reads CCSKTNICEKC. A ribonucleoside 5'-triphosphate is bound at residue 182 to 188; that stretch reads SGRRGIH. D333 contributes to the Mg(2+) binding site. D333 provides a ligand contact to Mn(2+). 342–345 provides a ligand contact to a ribonucleoside 5'-triphosphate; it reads HLLK. The segment at 385–420 is disordered; sequence DKNSQNDNGHGPTMETNTTENQKDNARGQSNKGHGF. 2 stretches are compositionally biased toward polar residues: residues 389-404 and 411-420; these read QNDNGHGPTMETNTTE and RGQSNKGHGF.

It belongs to the eukaryotic-type primase small subunit family. Heterodimer of a catalytic subunit spp1/pri1 and a regulatory subunit spp2/pri2, also known as the DNA primase complex. Component of the alpha DNA polymerase complex (also known as the alpha DNA polymerase-primase complex) consisting of four subunits: the catalytic subunit pol1, the accessory subunit spb70/pol12, and the primase complex subunits spp1/pri1 and spp2/pri2 respectively. It depends on Mg(2+) as a cofactor. Mn(2+) serves as cofactor.

Its subcellular location is the nucleus. It carries out the reaction ssDNA + n NTP = ssDNA/pppN(pN)n-1 hybrid + (n-1) diphosphate.. Functionally, catalytic subunit of the DNA primase complex and component of the DNA polymerase alpha complex (also known as the alpha DNA polymerase-primase complex - primosome/replisome) which play an essential role in the initiation of DNA synthesis. During the S phase of the cell cycle, the DNA polymerase alpha complex (composed of a catalytic subunit pol1, an accessory subunit spb70/pol12 and two primase subunits, the catalytic subunit spp1/pri1 and the regulatory subunit spp2/pri2) is recruited to DNA at the replicative forks. The primase subunit of the polymerase alpha complex initiates DNA synthesis by oligomerising short RNA primers on both leading and lagging strands. The polypeptide is DNA primase small subunit (Schizosaccharomyces pombe (strain 972 / ATCC 24843) (Fission yeast)).